Here is a 264-residue protein sequence, read N- to C-terminus: tRNA (guanine-N(1)-)-methyltransferase (264 aa).

S-adenosyl-L-methionine is bound at residue 149–154 (IGDYVL).

The protein belongs to the RNA methyltransferase TrmD family. In terms of assembly, homodimer.

It localises to the cytoplasm. The enzyme catalyses guanosine(37) in tRNA + S-adenosyl-L-methionine = N(1)-methylguanosine(37) in tRNA + S-adenosyl-L-homocysteine + H(+). Its function is as follows. Specifically methylates guanosine-37 in various tRNAs. The chain is tRNA (guanine-N(1)-)-methyltransferase from Methylobacillus flagellatus (strain ATCC 51484 / DSM 6875 / VKM B-1610 / KT).